The chain runs to 180 residues: Translation initiation factor IF-3 (180 aa).

This sequence belongs to the IF-3 family. Monomer.

Its subcellular location is the cytoplasm. Its function is as follows. IF-3 binds to the 30S ribosomal subunit and shifts the equilibrium between 70S ribosomes and their 50S and 30S subunits in favor of the free subunits, thus enhancing the availability of 30S subunits on which protein synthesis initiation begins. This is Translation initiation factor IF-3 from Salmonella typhimurium (strain LT2 / SGSC1412 / ATCC 700720).